Consider the following 311-residue polypeptide: Cell division control protein 2 homolog 3 (311 aa).

Residues 23 to 306 (YNRMDILGEG…AKAALQHPWF (284 aa)) enclose the Protein kinase domain. ATP contacts are provided by residues 29–37 (LGEGTYGVV) and Lys52. Phosphothreonine is present on Thr33. Tyr34 carries the post-translational modification Phosphotyrosine. Catalysis depends on Asp145, which acts as the Proton acceptor.

It belongs to the protein kinase superfamily. CMGC Ser/Thr protein kinase family. CDC2/CDKX subfamily. Forms a stable but non-covalent complex with a regulatory subunit and with a cyclin.

It carries out the reaction L-seryl-[protein] + ATP = O-phospho-L-seryl-[protein] + ADP + H(+). It catalyses the reaction L-threonyl-[protein] + ATP = O-phospho-L-threonyl-[protein] + ADP + H(+). Phosphorylation at Thr-33 or Tyr-34 inactivates the enzyme. Its function is as follows. Probably involved in the control of the cell cycle. This is Cell division control protein 2 homolog 3 (CRK3) from Trypanosoma brucei brucei.